We begin with the raw amino-acid sequence, 83 residues long: U5-theraphotoxin-Hs1b 2 (83 aa).

Positions 1–21 are cleaved as a signal peptide; that stretch reads MQTSMFLTLTGLVLLFVVCYA. The propeptide occupies 22–49; it reads SESEEKEFPKELLSSIFAADSDFKEEER. Disulfide bonds link C51/C63, C56/C68, and C62/C75.

The protein belongs to the neurotoxin 10 (Hwtx-1) family. 51 (Hntx-8) subfamily. Hntx-8 sub-subfamily. As to expression, expressed by the venom gland.

Its subcellular location is the secreted. Its function is as follows. Agglutinates erythrocytes. In Cyriopagopus schmidti (Chinese bird spider), this protein is U5-theraphotoxin-Hs1b 2.